A 108-amino-acid chain; its full sequence is DVVMTQTPASVSEPVGGTVTIKCQASQSIYSNLAWYQZKPGQPPKLLIYKASTLESGVPSRFKGSGSGTDFTLTISDLECADAATYFCQGSBYTGTVFGGGTEVVVKG.

The interval 1-23 (DVVMTQTPASVSEPVGGTVTIKC) is framework-1. 2 disulfide bridges follow: Cys23–Cys88 and Cys80–Gly108. Residues 24 to 34 (QASQSIYSNLA) form a complementarity-determining-1 region. The interval 35 to 49 (WYQZKPGQPPKLLIY) is framework-2. The complementarity-determining-2 stretch occupies residues 50 to 56 (KASTLES). The segment at 57–88 (GVPSRFKGSGSGTDFTLTISDLECADAATYFC) is framework-3. The complementarity-determining-3 stretch occupies residues 89–97 (QGSBYTGTV). The framework-4 stretch occupies residues 98 to 107 (FGGGTEVVVK).

The protein is Ig kappa chain V region BS-5 of Oryctolagus cuniculus (Rabbit).